We begin with the raw amino-acid sequence, 191 residues long: LHFPL tetraspan subfamily member 7 protein (191 aa).

A run of 4 helical transmembrane segments spans residues 6–26 (MGSLWVILSLILTLISGFSLM), 72–92 (IAAVLLFGGWLLLSFGAVLVL), 112–132 (YAQISAVVVTVLGLLVFPFNL), and 154–174 (LGWGYMMAIVTVMLSCFLPFI).

The protein belongs to the TMEM211 family.

Its subcellular location is the membrane. This chain is LHFPL tetraspan subfamily member 7 protein (lhfpl7), found in Xenopus tropicalis (Western clawed frog).